The sequence spans 71 residues: Protein SlyX homolog (71 aa).

Belongs to the SlyX family.

The polypeptide is Protein SlyX homolog (Thioalkalivibrio sulfidiphilus (strain HL-EbGR7)).